We begin with the raw amino-acid sequence, 251 residues long: Probable transcriptional regulatory protein BLD_0450 (251 aa).

It belongs to the TACO1 family.

Its subcellular location is the cytoplasm. This chain is Probable transcriptional regulatory protein BLD_0450, found in Bifidobacterium longum (strain DJO10A).